We begin with the raw amino-acid sequence, 339 residues long: Dihydroorotase (339 aa).

Zn(2+) contacts are provided by histidine 12 and histidine 14. Residues 14–16 (HVR) and asparagine 40 contribute to the substrate site. The Zn(2+) site is built by lysine 94, histidine 133, histidine 167, and aspartate 239. An N6-carboxylysine modification is found at lysine 94. Histidine 133 provides a ligand contact to substrate. The active site involves aspartate 239. Residues histidine 243 and alanine 255 each contribute to the substrate site.

Belongs to the metallo-dependent hydrolases superfamily. DHOase family. Class II DHOase subfamily. As to quaternary structure, homodimer. Zn(2+) is required as a cofactor.

It carries out the reaction (S)-dihydroorotate + H2O = N-carbamoyl-L-aspartate + H(+). The protein operates within pyrimidine metabolism; UMP biosynthesis via de novo pathway; (S)-dihydroorotate from bicarbonate: step 3/3. In terms of biological role, catalyzes the reversible cyclization of carbamoyl aspartate to dihydroorotate. This Helicobacter pylori (strain J99 / ATCC 700824) (Campylobacter pylori J99) protein is Dihydroorotase.